A 162-amino-acid chain; its full sequence is Iron-sulfur cluster assembly protein IscU (162 aa).

This sequence belongs to the NifU family. In terms of assembly, homotrimer. Small proportion is monomeric. Interacts with IscS. Interacts with ABCB6. Component of a complex, at least composed of IscS, Isd11 and IscU. It depends on [4Fe-4S] cluster as a cofactor.

It localises to the mitochondrion. It participates in cofactor biosynthesis; iron-sulfur cluster biosynthesis. Its function is as follows. Participates in iron-sulfur cluster formation (ISC) pathway for iron-sulfur (Fe-S) cluster biogenesis. Plays a role of a major scaffold protein for [Fe-S] assembly; assembles [4Fe-4S] clusters directly upon interaction with the catalytic component IscS-Isd11 as part of the scaffold complex. Can transfer [4Fe-4S] clusters to target apo-proteins. The chain is Iron-sulfur cluster assembly protein IscU from Plasmodium falciparum (isolate 3D7).